Consider the following 390-residue polypeptide: S-adenosylmethionine synthase (390 aa).

Histidine 17 contacts ATP. Aspartate 19 provides a ligand contact to Mg(2+). Glutamate 45 is a binding site for K(+). Glutamate 58 and glutamine 101 together coordinate L-methionine. Positions 101–111 are flexible loop; sequence QSPDIGQGVDT. Residues 160–162, 226–227, aspartate 235, 241–242, alanine 258, and lysine 262 each bind ATP; these read DGK, RF, and RK. Aspartate 235 lines the L-methionine pocket. Lysine 266 lines the L-methionine pocket.

The protein belongs to the AdoMet synthase family. As to quaternary structure, homotetramer; dimer of dimers. The cofactor is Mg(2+). K(+) is required as a cofactor.

Its subcellular location is the cytoplasm. It carries out the reaction L-methionine + ATP + H2O = S-adenosyl-L-methionine + phosphate + diphosphate. Its pathway is amino-acid biosynthesis; S-adenosyl-L-methionine biosynthesis; S-adenosyl-L-methionine from L-methionine: step 1/1. Catalyzes the formation of S-adenosylmethionine (AdoMet) from methionine and ATP. The overall synthetic reaction is composed of two sequential steps, AdoMet formation and the subsequent tripolyphosphate hydrolysis which occurs prior to release of AdoMet from the enzyme. The sequence is that of S-adenosylmethionine synthase from Anaeromyxobacter dehalogenans (strain 2CP-1 / ATCC BAA-258).